The following is a 425-amino-acid chain: tRNA(Ile)-lysidine synthase (425 aa).

Residue 27–32 (SGGLDS) coordinates ATP.

Belongs to the tRNA(Ile)-lysidine synthase family.

The protein localises to the cytoplasm. The enzyme catalyses cytidine(34) in tRNA(Ile2) + L-lysine + ATP = lysidine(34) in tRNA(Ile2) + AMP + diphosphate + H(+). Functionally, ligates lysine onto the cytidine present at position 34 of the AUA codon-specific tRNA(Ile) that contains the anticodon CAU, in an ATP-dependent manner. Cytidine is converted to lysidine, thus changing the amino acid specificity of the tRNA from methionine to isoleucine. In Streptococcus pneumoniae serotype 2 (strain D39 / NCTC 7466), this protein is tRNA(Ile)-lysidine synthase.